We begin with the raw amino-acid sequence, 502 residues long: Glucose-6-phosphate isomerase (502 aa).

Catalysis depends on Glu331, which acts as the Proton donor. Residues His362 and Lys471 contribute to the active site.

This sequence belongs to the GPI family.

The protein localises to the cytoplasm. It carries out the reaction alpha-D-glucose 6-phosphate = beta-D-fructose 6-phosphate. Its pathway is carbohydrate biosynthesis; gluconeogenesis. The protein operates within carbohydrate degradation; glycolysis; D-glyceraldehyde 3-phosphate and glycerone phosphate from D-glucose: step 2/4. In terms of biological role, catalyzes the reversible isomerization of glucose-6-phosphate to fructose-6-phosphate. The polypeptide is Glucose-6-phosphate isomerase (Xylella fastidiosa (strain 9a5c)).